We begin with the raw amino-acid sequence, 267 residues long: Cell cycle checkpoint protein RAD1 homolog mrt-2 (267 aa).

It belongs to the Rad1 family. In terms of assembly, probable component of the toroidal 9-1-1 (RAD9-RAD1-HUS1) complex, composed of hpr-9, mrt-2 and hus-1. Interacts with hus-1. Might associate with hpr-9.

The protein localises to the nucleus. It catalyses the reaction Exonucleolytic cleavage in the 3'- to 5'-direction to yield nucleoside 5'-phosphates.. Functionally, may be a component of the 9-1-1 cell-cycle checkpoint response complex that plays a major role in DNA repair. Promotes DNA double strand break-induced cell cycle arrest and apoptosis, thereby playing a role in genome stability. Also required for telomere length maintenance and germline immortality. May possess 3'-&gt;5' double stranded DNA exonuclease activity. The sequence is that of Cell cycle checkpoint protein RAD1 homolog mrt-2 from Caenorhabditis elegans.